The following is a 587-amino-acid chain: Leucine-rich repeat-containing protein 63 (587 aa).

LRR repeat units follow at residues 251-274 (QSVI…IPPR), 344-367 (AFQL…ILCL), 368-390 (KNLQ…IQQL), 392-413 (FLRI…LFSL), 414-436 (SYLE…IQKL), 437-459 (RSLE…ILKL), and 487-510 (LTQI…IPVE).

This is Leucine-rich repeat-containing protein 63 (LRRC63) from Homo sapiens (Human).